A 549-amino-acid chain; its full sequence is MKSDNIKKGIQRAPHRSLLRACGLGDNDFDKPFIGIANSFTEIVPGHIHLRELVEFVKEGIIAAGGIPFEFNTMAICDGISMNHEGMKYSLPSREIIAATVESMAKGHSFDGLVLMPSCDKVVPGMLMGAARVDVPTIVVTGGPMAAGQYKGKNADLITVFEAVGQESAGKISEEEVYEIEKCACPGAGSCSGLFTANTMACVTETLGLSLPFCATTHAADKANEKMAYNSGKQIIKLVEADLKPSDILTQEAFNNAITVDMALGGSSNTALHIPAIANEVEDVEVTLDLFDKISRVVPHICLISPAGTDTMMDLHKAGGIPGVLKTLGDKIDTSAITVTTKTLGENIKDVEVTNTDVIHPLDNPIHKDGGIAILKGNIAPNGSVVKKGAVSPDLMHLKGPAKVFNSEEEVTQAIFDHEVEEGDILVIRYEGPKGGPGMREMLNPTSALAGMQIKNVGLITDGRFSGGTRGPCIGHVSPEAMSDGPIGAIEDGDIIEIDIENRFINVELSDEEISNRLANRKNPKRDVDGWLSIYSKVVQSADTGAILR.

Asp-78 is a Mg(2+) binding site. Cys-119 contacts [2Fe-2S] cluster. 2 residues coordinate Mg(2+): Asp-120 and Lys-121. The residue at position 121 (Lys-121) is an N6-carboxylysine. [2Fe-2S] cluster is bound at residue Cys-191. Residue Glu-441 participates in Mg(2+) binding. Ser-466 acts as the Proton acceptor in catalysis.

It belongs to the IlvD/Edd family. In terms of assembly, homodimer. Requires [2Fe-2S] cluster as cofactor. The cofactor is Mg(2+).

The enzyme catalyses (2R)-2,3-dihydroxy-3-methylbutanoate = 3-methyl-2-oxobutanoate + H2O. It catalyses the reaction (2R,3R)-2,3-dihydroxy-3-methylpentanoate = (S)-3-methyl-2-oxopentanoate + H2O. It functions in the pathway amino-acid biosynthesis; L-isoleucine biosynthesis; L-isoleucine from 2-oxobutanoate: step 3/4. The protein operates within amino-acid biosynthesis; L-valine biosynthesis; L-valine from pyruvate: step 3/4. In terms of biological role, functions in the biosynthesis of branched-chain amino acids. Catalyzes the dehydration of (2R,3R)-2,3-dihydroxy-3-methylpentanoate (2,3-dihydroxy-3-methylvalerate) into 2-oxo-3-methylpentanoate (2-oxo-3-methylvalerate) and of (2R)-2,3-dihydroxy-3-methylbutanoate (2,3-dihydroxyisovalerate) into 2-oxo-3-methylbutanoate (2-oxoisovalerate), the penultimate precursor to L-isoleucine and L-valine, respectively. The protein is Dihydroxy-acid dehydratase of Methanobrevibacter smithii (strain ATCC 35061 / DSM 861 / OCM 144 / PS).